We begin with the raw amino-acid sequence, 161 residues long: C-type natriuretic peptide (161 aa).

The first 22 residues, M1–P22, serve as a signal peptide directing secretion. The interval D19–G135 is disordered. A propeptide spanning residues A23 to K139 is cleaved from the precursor. Low complexity-rich tracts occupy residues L29–P60 and A76–R93. The segment covering L94–Q104 has biased composition (basic and acidic residues). Gly residues predominate over residues G120–S130. C145 and C161 are oxidised to a cystine.

It belongs to the natriuretic peptide family. Expressed by the venom gland.

It is found in the secreted. Snake venom natriuretic peptide that has a vasorelaxant activity in rat aortic strips and a diuretic potency in anesthetized rats. May act by activating natriuretic receptors (NPR1 and/or NPR2). This chain is C-type natriuretic peptide, found in Rhabdophis tigrinus tigrinus (Tiger keelback snake).